Consider the following 146-residue polypeptide: 3-dehydroquinate dehydratase (146 aa).

Residue tyrosine 22 is the Proton acceptor of the active site. Asparagine 73, histidine 79, and aspartate 86 together coordinate substrate. Histidine 99 serves as the catalytic Proton donor. Substrate is bound by residues 100–101 (LS) and arginine 110.

This sequence belongs to the type-II 3-dehydroquinase family. Homododecamer.

It carries out the reaction 3-dehydroquinate = 3-dehydroshikimate + H2O. Its pathway is metabolic intermediate biosynthesis; chorismate biosynthesis; chorismate from D-erythrose 4-phosphate and phosphoenolpyruvate: step 3/7. In terms of biological role, catalyzes a trans-dehydration via an enolate intermediate. The polypeptide is 3-dehydroquinate dehydratase (Parasynechococcus marenigrum (strain WH8102)).